We begin with the raw amino-acid sequence, 127 residues long: Fumarate reductase subunit C (127 aa).

A run of 3 helical transmembrane segments spans residues 30–50, 67–87, and 107–127; these read ATVL…GSLV, VVIA…HTFF, and IIVL…LIVV.

The protein belongs to the FrdC family. As to quaternary structure, part of an enzyme complex containing four subunits: a flavoprotein (FrdA), an iron-sulfur protein (FrdB), and two hydrophobic anchor proteins (FrdC and FrdD).

Its subcellular location is the cell inner membrane. Functionally, anchors the catalytic components of the fumarate reductase complex to the cell membrane, binds quinones. In Vibrio vulnificus (strain CMCP6), this protein is Fumarate reductase subunit C.